The primary structure comprises 424 residues: tRNA(Ile)-lysidine synthase (424 aa).

26 to 31 (SGGIDS) is an ATP binding site.

It belongs to the tRNA(Ile)-lysidine synthase family.

The protein localises to the cytoplasm. It carries out the reaction cytidine(34) in tRNA(Ile2) + L-lysine + ATP = lysidine(34) in tRNA(Ile2) + AMP + diphosphate + H(+). Ligates lysine onto the cytidine present at position 34 of the AUA codon-specific tRNA(Ile) that contains the anticodon CAU, in an ATP-dependent manner. Cytidine is converted to lysidine, thus changing the amino acid specificity of the tRNA from methionine to isoleucine. The sequence is that of tRNA(Ile)-lysidine synthase from Streptococcus agalactiae serotype V (strain ATCC BAA-611 / 2603 V/R).